Consider the following 113-residue polypeptide: Major basic nuclear protein 1 (113 aa).

Residues 1 to 20 (MAPKMKAAMKAMKAPAMKGK) are disordered.

It localises to the nucleus. The chain is Major basic nuclear protein 1 (HCc1) from Crypthecodinium cohnii (Dinoflagellate).